A 103-amino-acid polypeptide reads, in one-letter code: UPF0134 protein MPN_484 (103 aa).

The protein belongs to the UPF0134 family.

The sequence is that of UPF0134 protein MPN_484 from Mycoplasma pneumoniae (strain ATCC 29342 / M129 / Subtype 1) (Mycoplasmoides pneumoniae).